The following is a 261-amino-acid chain: 5'-nucleotidase SurE (261 aa).

The a divalent metal cation site is built by Asp-8, Asp-9, Ser-43, and Asn-96.

Belongs to the SurE nucleotidase family. A divalent metal cation is required as a cofactor.

The protein localises to the cytoplasm. The catalysed reaction is a ribonucleoside 5'-phosphate + H2O = a ribonucleoside + phosphate. Functionally, nucleotidase that shows phosphatase activity on nucleoside 5'-monophosphates. The protein is 5'-nucleotidase SurE of Dinoroseobacter shibae (strain DSM 16493 / NCIMB 14021 / DFL 12).